Reading from the N-terminus, the 171-residue chain is Serine acetyltransferase (171 aa).

This sequence belongs to the transferase hexapeptide repeat family.

It localises to the cytoplasm. The catalysed reaction is L-serine + acetyl-CoA = O-acetyl-L-serine + CoA. It functions in the pathway amino-acid biosynthesis; L-cysteine biosynthesis; L-cysteine from L-serine: step 1/2. In Helicobacter pylori (strain J99 / ATCC 700824) (Campylobacter pylori J99), this protein is Serine acetyltransferase (cysE).